Here is a 356-residue protein sequence, read N- to C-terminus: Heat-inducible transcription repressor HrcA (356 aa).

Belongs to the HrcA family.

Functionally, negative regulator of class I heat shock genes (grpE-dnaK-dnaJ and groELS operons). Prevents heat-shock induction of these operons. In Chlorobaculum parvum (strain DSM 263 / NCIMB 8327) (Chlorobium vibrioforme subsp. thiosulfatophilum), this protein is Heat-inducible transcription repressor HrcA.